The following is a 452-amino-acid chain: Exodeoxyribonuclease 7 large subunit (452 aa).

The protein belongs to the XseA family. As to quaternary structure, heterooligomer composed of large and small subunits.

It localises to the cytoplasm. It carries out the reaction Exonucleolytic cleavage in either 5'- to 3'- or 3'- to 5'-direction to yield nucleoside 5'-phosphates.. Bidirectionally degrades single-stranded DNA into large acid-insoluble oligonucleotides, which are then degraded further into small acid-soluble oligonucleotides. The sequence is that of Exodeoxyribonuclease 7 large subunit from Bacillus cereus (strain 03BB102).